A 147-amino-acid chain; its full sequence is Leech anti-platelet protein (147 aa).

A signal peptide spans 1-21 (MNSFLFSLACSLLVAIPAISA). A disordered region spans residues 21 to 71 (AQDEDAGGAGDETSEGEDTTGSDETPSTGGGGDGGNEETITAGNEDCWSKR). Residues 22–41 (QDEDAGGAGDETSEGEDTTG) are compositionally biased toward acidic residues. Intrachain disulfides connect Cys-67/Cys-145, Cys-92/Cys-117, and Cys-96/Cys-105.

Post-translationally, the N-terminus is blocked. As to expression, expressed by salivary glands.

It is found in the secreted. In terms of biological role, inhibits collagen-stimulated platelet aggregation (IC(50)=60 nM), dense granule release and serotonin release. Does not inhibit platelet aggregation induced by ADP, arachidonic acid, and thrombin. The polypeptide is Leech anti-platelet protein (Haementeria officinalis (Mexican leech)).